The sequence spans 439 residues: tRNA(Ile)-lysidine synthase (439 aa).

23-28 (SGGLDS) is a binding site for ATP.

This sequence belongs to the tRNA(Ile)-lysidine synthase family.

It is found in the cytoplasm. The catalysed reaction is cytidine(34) in tRNA(Ile2) + L-lysine + ATP = lysidine(34) in tRNA(Ile2) + AMP + diphosphate + H(+). Functionally, ligates lysine onto the cytidine present at position 34 of the AUA codon-specific tRNA(Ile) that contains the anticodon CAU, in an ATP-dependent manner. Cytidine is converted to lysidine, thus changing the amino acid specificity of the tRNA from methionine to isoleucine. The chain is tRNA(Ile)-lysidine synthase from Methylococcus capsulatus (strain ATCC 33009 / NCIMB 11132 / Bath).